The chain runs to 127 residues: Large ribosomal subunit protein bL12 (127 aa).

This sequence belongs to the bacterial ribosomal protein bL12 family. In terms of assembly, homodimer. Part of the ribosomal stalk of the 50S ribosomal subunit. Forms a multimeric L10(L12)X complex, where L10 forms an elongated spine to which 2 to 4 L12 dimers bind in a sequential fashion. Binds GTP-bound translation factors.

In terms of biological role, forms part of the ribosomal stalk which helps the ribosome interact with GTP-bound translation factors. Is thus essential for accurate translation. The protein is Large ribosomal subunit protein bL12 of Phytoplasma mali (strain AT).